The primary structure comprises 538 residues: ATP synthase subunit beta 2 (538 aa).

The segment covering 1–10 has biased composition (polar residues); sequence MADPQATNGT. The interval 1-30 is disordered; sequence MADPQATNGTGAACAERDASDVGDVSDVGD. 185-192 lines the ATP pocket; it reads GGAGVGKT. Residues 494–505 show a composition bias toward basic and acidic residues; that stretch reads AAAREADARREA. The disordered stretch occupies residues 494–538; that stretch reads AAAREADARREAAAAASVAGPGTTSGTTSDPASGSAEPQGARHGR. Positions 506–529 are enriched in low complexity; the sequence is AAAASVAGPGTTSGTTSDPASGSA.

Belongs to the ATPase alpha/beta chains family. In terms of assembly, F-type ATPases have 2 components, CF(1) - the catalytic core - and CF(0) - the membrane proton channel. CF(1) has five subunits: alpha(3), beta(3), gamma(1), delta(1), epsilon(1). CF(0) has three main subunits: a(1), b(2) and c(9-12). The alpha and beta chains form an alternating ring which encloses part of the gamma chain. CF(1) is attached to CF(0) by a central stalk formed by the gamma and epsilon chains, while a peripheral stalk is formed by the delta and b chains.

The protein resides in the cell inner membrane. The catalysed reaction is ATP + H2O + 4 H(+)(in) = ADP + phosphate + 5 H(+)(out). Its function is as follows. Produces ATP from ADP in the presence of a proton gradient across the membrane. The catalytic sites are hosted primarily by the beta subunits. This chain is ATP synthase subunit beta 2, found in Burkholderia pseudomallei (strain K96243).